The sequence spans 391 residues: Terminal nucleotidyltransferase 5C (391 aa).

This sequence belongs to the TENT family. Interacts with BCCIP and PABPC1; the interaction has no effect on TENT5C poly(A) polymerase function. Interacts with PLK4; this interaction leads to the TENT5C recruitment into the centrosome.

The protein localises to the nucleus. The protein resides in the cytoplasm. It localises to the cytoskeleton. It is found in the microtubule organizing center. Its subcellular location is the centrosome. The enzyme catalyses RNA(n) + ATP = RNA(n)-3'-adenine ribonucleotide + diphosphate. Catalyzes the transfer of one adenosine molecule from an ATP to an mRNA poly(A) tail bearing a 3'-OH terminal group and enhances mRNA stability and gene expression. Can also elongate RNA oligos ending with uridine molecule, provided that the sequence is adenosine-rich. Mainly targets mRNAs encoding endoplasmic reticulum-targeted protein. The sequence is that of Terminal nucleotidyltransferase 5C from Rattus norvegicus (Rat).